The following is a 262-amino-acid chain: Ribosomal RNA small subunit methyltransferase A (262 aa).

His-16, Leu-18, Gly-43, Glu-64, Asp-89, and Asn-109 together coordinate S-adenosyl-L-methionine.

It belongs to the class I-like SAM-binding methyltransferase superfamily. rRNA adenine N(6)-methyltransferase family. RsmA subfamily.

Its subcellular location is the cytoplasm. The catalysed reaction is adenosine(1518)/adenosine(1519) in 16S rRNA + 4 S-adenosyl-L-methionine = N(6)-dimethyladenosine(1518)/N(6)-dimethyladenosine(1519) in 16S rRNA + 4 S-adenosyl-L-homocysteine + 4 H(+). Specifically dimethylates two adjacent adenosines (A1518 and A1519) in the loop of a conserved hairpin near the 3'-end of 16S rRNA in the 30S particle. May play a critical role in biogenesis of 30S subunits. The sequence is that of Ribosomal RNA small subunit methyltransferase A from Xanthomonas axonopodis pv. citri (strain 306).